Reading from the N-terminus, the 259-residue chain is MTDLKASSLRALKLMDLTTLNDDDTDEKVIALCHQAKTPVGNTAAICIYPRFIPIARKTLKEQGTPEIRIATVTNFPHGNDDIEIALAETRAAIAYGADEVDVVFPYRALMAGNEQVGFDLVKACKEACAAANVLLKVIIETGELKDEALIRKASEISIKAGADFIKTSTGKVAVNATPESARIMMEVIRDMGVEKTVGFKPAGGVRTAEDAQKYLAIADELFGADWADARHYRFGASSLLASLLKALGHGDGKSASSY.

Asp102 (proton donor/acceptor) is an active-site residue. Lys167 serves as the catalytic Schiff-base intermediate with acetaldehyde. Catalysis depends on Lys201, which acts as the Proton donor/acceptor.

The protein belongs to the DeoC/FbaB aldolase family. DeoC type 2 subfamily.

The protein resides in the cytoplasm. The enzyme catalyses 2-deoxy-D-ribose 5-phosphate = D-glyceraldehyde 3-phosphate + acetaldehyde. The protein operates within carbohydrate degradation; 2-deoxy-D-ribose 1-phosphate degradation; D-glyceraldehyde 3-phosphate and acetaldehyde from 2-deoxy-alpha-D-ribose 1-phosphate: step 2/2. Its function is as follows. Catalyzes a reversible aldol reaction between acetaldehyde and D-glyceraldehyde 3-phosphate to generate 2-deoxy-D-ribose 5-phosphate. The polypeptide is Deoxyribose-phosphate aldolase (Escherichia fergusonii (strain ATCC 35469 / DSM 13698 / CCUG 18766 / IAM 14443 / JCM 21226 / LMG 7866 / NBRC 102419 / NCTC 12128 / CDC 0568-73)).